We begin with the raw amino-acid sequence, 351 residues long: Probable E3 ubiquitin-protein ligase sinah (351 aa).

The interval 1 to 38 (MSVRNSRPQLSWPERVSPQRTIDTPTASGEMLTRRQSA) is disordered. The span at 18–27 (PQRTIDTPTA) shows a compositional bias: polar residues. Residues 106–141 (CPVCFGYIMPPIMQCPRGHLICSTCRSKLTICPVCR) form an RING-type zinc finger. An SBD region spans residues 155 to 346 (VASKLIFPCK…LALNVVIRKV (192 aa)). The segment at 158–218 (KLIFPCKHSH…VYQHLMSSHE (61 aa)) adopts an SIAH-type zinc-finger fold. Zn(2+) contacts are provided by Cys163, Cys170, His182, Cys186, Cys193, Cys200, His212, and His217.

It belongs to the SINA (Seven in absentia) family. As to quaternary structure, interacts with ebi and phyl.

The catalysed reaction is S-ubiquitinyl-[E2 ubiquitin-conjugating enzyme]-L-cysteine + [acceptor protein]-L-lysine = [E2 ubiquitin-conjugating enzyme]-L-cysteine + N(6)-ubiquitinyl-[acceptor protein]-L-lysine.. The protein operates within protein modification; protein ubiquitination. In terms of biological role, E3 ubiquitin-protein ligase that mediates ubiquitination and subsequent proteasomal degradation of target proteins. The adapter phyl is required to direct the degradation of the two isoforms of the transcriptional repressor Tramtrack (Ttk). E3 ubiquitin ligases accept ubiquitin from an E2 ubiquitin-conjugating enzyme in the form of a thioester and then directly transfers the ubiquitin to targeted substrates. It probably triggers the ubiquitin-mediated degradation of different substrates. A phyl-independent mechanism of degradation exists for isoform beta of ttk that involves motifs in the C-terminus of ttk. This chain is Probable E3 ubiquitin-protein ligase sinah (sinah), found in Drosophila melanogaster (Fruit fly).